Here is a 348-residue protein sequence, read N- to C-terminus: Inactive rhomboid-related protein 2 (348 aa).

Residues 14-49 (IEASSWIRIFRAFDTDHDGLIQCEEMQKTIRDSTYS) enclose the EF-hand domain. Ca(2+)-binding residues include aspartate 27, aspartate 29, aspartate 31, and glutamate 38. 7 consecutive transmembrane segments (helical) span residues 121-141 (PPIF…YYVV), 177-197 (LINV…AIGV), 207-227 (IYIL…ALDP), 229-249 (VFLC…ITTI), 263-283 (LPIL…QRFF), 290-310 (VSMY…FILF), and 323-343 (FWVS…LIAA).

Belongs to the peptidase S54 family.

Its subcellular location is the membrane. In terms of biological role, probable inactive serine protease. This Caenorhabditis elegans protein is Inactive rhomboid-related protein 2.